An 88-amino-acid polypeptide reads, in one-letter code: Phosphocarrier protein HPr (88 aa).

The HPr domain occupies 1 to 88 (MKKFQAVIKD…KACLEKNKVI (88 aa)). The Pros-phosphohistidine intermediate role is filled by H15. Position 47 is a phosphoserine; by HPrK/P (S47).

The protein belongs to the HPr family.

The protein localises to the cytoplasm. Phosphorylation on Ser-47 inhibits the phosphoryl transfer from enzyme I to HPr. General (non sugar-specific) component of the phosphoenolpyruvate-dependent sugar phosphotransferase system (sugar PTS). This major carbohydrate active-transport system catalyzes the phosphorylation of incoming sugar substrates concomitantly with their translocation across the cell membrane. The phosphoryl group from phosphoenolpyruvate (PEP) is transferred to the phosphoryl carrier protein HPr by enzyme I. Phospho-HPr then transfers it to the PTS EIIA domain. Functionally, P-Ser-HPr interacts with the catabolite control protein A (CcpA), forming a complex that binds to DNA at the catabolite response elements cre, operator sites preceding a large number of catabolite-regulated genes. Thus, P-Ser-HPr is a corepressor in carbon catabolite repression (CCR), a mechanism that allows bacteria to coordinate and optimize the utilization of available carbon sources. P-Ser-HPr also plays a role in inducer exclusion, in which it probably interacts with several non-PTS permeases and inhibits their transport activity. This Mycoplasma genitalium (strain ATCC 33530 / DSM 19775 / NCTC 10195 / G37) (Mycoplasmoides genitalium) protein is Phosphocarrier protein HPr (ptsH).